Here is a 249-residue protein sequence, read N- to C-terminus: Phosphate import ATP-binding protein PstB (249 aa).

The ABC transporter domain maps to 3–244 (IEANDVHVYY…PKKKRTQNYI (242 aa)). 35–42 (GPSGCGKS) serves as a coordination point for ATP.

The protein belongs to the ABC transporter superfamily. Phosphate importer (TC 3.A.1.7) family. The complex is composed of two ATP-binding proteins (PstB), two transmembrane proteins (PstC and PstA) and a solute-binding protein (PstS).

Its subcellular location is the cell inner membrane. The catalysed reaction is phosphate(out) + ATP + H2O = ADP + 2 phosphate(in) + H(+). Functionally, part of the ABC transporter complex PstSACB involved in phosphate import. Responsible for energy coupling to the transport system. This chain is Phosphate import ATP-binding protein PstB, found in Cytophaga hutchinsonii (strain ATCC 33406 / DSM 1761 / CIP 103989 / NBRC 15051 / NCIMB 9469 / D465).